Here is a 938-residue protein sequence, read N- to C-terminus: Protocadherin gamma-C4 (938 aa).

The signal sequence occupies residues 1-29; sequence MLRKVRSWTEIWRWATLLFLFYHLGYVCG. 6 Cadherin domains span residues 30–133, 134–242, 243–350, 351–455, 456–565, and 572–676; these read QIRY…APRF, PRQQ…APAF, QQSS…APYI, TVTS…PPSF, FQRS…APAV, and PGSL…VPDL. Topologically, residues 30–692 are extracellular; it reads QIRYPVPEES…REGESRLTLY (663 aa). Residues N265, N276, and N444 are each glycosylated (N-linked (GlcNAc...) asparagine). Residues 693–713 traverse the membrane as a helical segment; the sequence is LAVSLVAICFVSFGSFVALLS. The Cytoplasmic segment spans residues 714–938; the sequence is KCLRGAACGV…KKKSGKKEKK (225 aa). Disordered stretches follow at residues 791-847 and 908-938; these read PSAP…WPNN and ATLTNAAGKRDGKAPAGGNGNKKKSGKKEKK. Over residues 822–847 the composition is skewed to polar residues; that stretch reads WRFSQAQRPGTSGSQNGDDTGTWPNN. A compositionally biased stretch (basic residues) spans 928 to 938; it reads NKKKSGKKEKK.

The protein resides in the cell membrane. Potential calcium-dependent cell-adhesion protein. May be involved in the establishment and maintenance of specific neuronal connections in the brain. The chain is Protocadherin gamma-C4 (PCDHGC4) from Homo sapiens (Human).